Consider the following 103-residue polypeptide: Large ribosomal subunit protein bL21 (103 aa).

Belongs to the bacterial ribosomal protein bL21 family. In terms of assembly, part of the 50S ribosomal subunit. Contacts protein L20.

This protein binds to 23S rRNA in the presence of protein L20. The protein is Large ribosomal subunit protein bL21 of Vibrio parahaemolyticus serotype O3:K6 (strain RIMD 2210633).